Consider the following 804-residue polypeptide: Leucine--tRNA ligase (804 aa).

The 'HIGH' region signature appears at 39–50 (PYPSGKGLHVGH). Positions 573–577 (KMSKS) match the 'KMSKS' region motif. Lys-576 contributes to the ATP binding site.

This sequence belongs to the class-I aminoacyl-tRNA synthetase family.

Its subcellular location is the cytoplasm. It catalyses the reaction tRNA(Leu) + L-leucine + ATP = L-leucyl-tRNA(Leu) + AMP + diphosphate. The polypeptide is Leucine--tRNA ligase (Lactobacillus delbrueckii subsp. bulgaricus (strain ATCC BAA-365 / Lb-18)).